The following is a 248-amino-acid chain: Ubiquinone/menaquinone biosynthesis C-methyltransferase UbiE (248 aa).

Residues Ser-68 and Asp-92 each coordinate S-adenosyl-L-methionine.

The protein belongs to the class I-like SAM-binding methyltransferase superfamily. MenG/UbiE family.

It catalyses the reaction a 2-demethylmenaquinol + S-adenosyl-L-methionine = a menaquinol + S-adenosyl-L-homocysteine + H(+). The enzyme catalyses a 2-methoxy-6-(all-trans-polyprenyl)benzene-1,4-diol + S-adenosyl-L-methionine = a 5-methoxy-2-methyl-3-(all-trans-polyprenyl)benzene-1,4-diol + S-adenosyl-L-homocysteine + H(+). It functions in the pathway quinol/quinone metabolism; menaquinone biosynthesis; menaquinol from 1,4-dihydroxy-2-naphthoate: step 2/2. It participates in cofactor biosynthesis; ubiquinone biosynthesis. In terms of biological role, methyltransferase required for the conversion of demethylmenaquinol (DMKH2) to menaquinol (MKH2) and the conversion of 2-polyprenyl-6-methoxy-1,4-benzoquinol (DDMQH2) to 2-polyprenyl-3-methyl-6-methoxy-1,4-benzoquinol (DMQH2). This Rickettsia bellii (strain RML369-C) protein is Ubiquinone/menaquinone biosynthesis C-methyltransferase UbiE.